Consider the following 235-residue polypeptide: Large ribosomal subunit protein uL1 (235 aa).

It belongs to the universal ribosomal protein uL1 family. As to quaternary structure, part of the 50S ribosomal subunit.

Its function is as follows. Binds directly to 23S rRNA. The L1 stalk is quite mobile in the ribosome, and is involved in E site tRNA release. Functionally, protein L1 is also a translational repressor protein, it controls the translation of the L11 operon by binding to its mRNA. The sequence is that of Large ribosomal subunit protein uL1 from Corynebacterium diphtheriae (strain ATCC 700971 / NCTC 13129 / Biotype gravis).